The primary structure comprises 388 residues: AdoMet-dependent heme synthase (388 aa).

Residues 1–12 (MHNANHPHGNGH) show a composition bias toward low complexity. The tract at residues 1–29 (MHNANHPHGNGHPAEKKGMGAHSGAMNMP) is disordered. The Radical SAM core domain occupies 34–257 (DGSPACRLIA…TSMHLKATCA (224 aa)). [4Fe-4S] cluster-binding residues include Cys50, Cys54, and Cys57.

The protein belongs to the radical SAM superfamily. Requires [4Fe-4S] cluster as cofactor.

It carries out the reaction Fe-coproporphyrin III + 2 S-adenosyl-L-methionine = heme b + 2 5'-deoxyadenosine + 2 L-methionine + 2 CO2. Its pathway is porphyrin-containing compound metabolism; protoheme biosynthesis. In terms of biological role, involved in siroheme-dependent heme b biosynthesis. Catalyzes the conversion of Fe-coproporphyrin III into heme by the oxidative decarboxylation of two propionate side chains. The polypeptide is AdoMet-dependent heme synthase (Oleidesulfovibrio alaskensis (strain ATCC BAA-1058 / DSM 17464 / G20) (Desulfovibrio alaskensis)).